The primary structure comprises 134 residues: ATP synthase epsilon chain (134 aa).

It belongs to the ATPase epsilon chain family. As to quaternary structure, F-type ATPases have 2 components, CF(1) - the catalytic core - and CF(0) - the membrane proton channel. CF(1) has five subunits: alpha(3), beta(3), gamma(1), delta(1), epsilon(1). CF(0) has three main subunits: a, b and c.

It localises to the cellular thylakoid membrane. Functionally, produces ATP from ADP in the presence of a proton gradient across the membrane. The polypeptide is ATP synthase epsilon chain (Prochlorococcus marinus (strain MIT 9515)).